Here is a 197-residue protein sequence, read N- to C-terminus: MAERKAEVTRNTLETQITCKINLDGSGQARFETGVPFLDHMLDQVARHGLIDMDIVAKGDLHIDAHHTVEDIGITLGQAVAKALGDKKGIRRYGHSYVPLDEALSRVVIDFSGRPGLEMHVEFTRSMIGQFDVDLFYEFFQGFVNHAQVTLHIDNLRGRNSHHQIETVFKAFGRALRMALELDPRMAGIMPSTKGAL.

This sequence belongs to the imidazoleglycerol-phosphate dehydratase family.

It is found in the cytoplasm. It catalyses the reaction D-erythro-1-(imidazol-4-yl)glycerol 3-phosphate = 3-(imidazol-4-yl)-2-oxopropyl phosphate + H2O. It participates in amino-acid biosynthesis; L-histidine biosynthesis; L-histidine from 5-phospho-alpha-D-ribose 1-diphosphate: step 6/9. The sequence is that of Imidazoleglycerol-phosphate dehydratase from Hahella chejuensis (strain KCTC 2396).